A 260-amino-acid chain; its full sequence is tRNA pseudouridine synthase A (260 aa).

Aspartate 52 serves as the catalytic Nucleophile. Tyrosine 111 lines the substrate pocket.

This sequence belongs to the tRNA pseudouridine synthase TruA family. In terms of assembly, homodimer.

It catalyses the reaction uridine(38/39/40) in tRNA = pseudouridine(38/39/40) in tRNA. Its function is as follows. Formation of pseudouridine at positions 38, 39 and 40 in the anticodon stem and loop of transfer RNAs. This chain is tRNA pseudouridine synthase A, found in Roseobacter denitrificans (strain ATCC 33942 / OCh 114) (Erythrobacter sp. (strain OCh 114)).